The following is a 462-amino-acid chain: L-seryl-tRNA(Sec) selenium transferase (462 aa).

Lysine 292 carries the N6-(pyridoxal phosphate)lysine modification.

It belongs to the SelA family. Pyridoxal 5'-phosphate is required as a cofactor.

It is found in the cytoplasm. The catalysed reaction is L-seryl-tRNA(Sec) + selenophosphate + H(+) = L-selenocysteinyl-tRNA(Sec) + phosphate. It functions in the pathway aminoacyl-tRNA biosynthesis; selenocysteinyl-tRNA(Sec) biosynthesis; selenocysteinyl-tRNA(Sec) from L-seryl-tRNA(Sec) (bacterial route): step 1/1. In terms of biological role, converts seryl-tRNA(Sec) to selenocysteinyl-tRNA(Sec) required for selenoprotein biosynthesis. The protein is L-seryl-tRNA(Sec) selenium transferase of Geotalea daltonii (strain DSM 22248 / JCM 15807 / FRC-32) (Geobacter daltonii).